Here is a 655-residue protein sequence, read N- to C-terminus: Serine/threonine-protein kinase SKM1 (655 aa).

The region spanning 3 to 118 (GVKKEGWISY…WLDAIFAKCP (116 aa)) is the PH domain. Residues 123–136 (VSSPTNFTHKVHVG) enclose the CRIB domain. Basic and acidic residues-rich tracts occupy residues 265–276 (EEGRVHVSKEST) and 318–327 (KNHDSKTKWH). Residues 265 to 327 (EEGRVHVSKE…KNHDSKTKWH (63 aa)) form a disordered region. Residues 360-639 (FQLVEKAGQG…VRKLLTFEFL (280 aa)) form the Protein kinase domain. ATP is bound by residues 366–374 (AGQGASGAV) and Lys-406. Residue Asp-507 is the Proton acceptor of the active site.

It belongs to the protein kinase superfamily. STE Ser/Thr protein kinase family. STE20 subfamily.

The catalysed reaction is L-seryl-[protein] + ATP = O-phospho-L-seryl-[protein] + ADP + H(+). It carries out the reaction L-threonyl-[protein] + ATP = O-phospho-L-threonyl-[protein] + ADP + H(+). Functionally, may be involved in cellular signaling or cytoskeletal functions. May play a role in morphogenetic control. The sequence is that of Serine/threonine-protein kinase SKM1 (SKM1) from Saccharomyces cerevisiae (strain ATCC 204508 / S288c) (Baker's yeast).